Consider the following 1385-residue polypeptide: DNA-directed RNA polymerase subunit beta'' (1385 aa).

Residues cysteine 224, cysteine 294, cysteine 301, and cysteine 304 each contribute to the Zn(2+) site.

Belongs to the RNA polymerase beta' chain family. RpoC2 subfamily. In terms of assembly, in plastids the minimal PEP RNA polymerase catalytic core is composed of four subunits: alpha, beta, beta', and beta''. When a (nuclear-encoded) sigma factor is associated with the core the holoenzyme is formed, which can initiate transcription. Requires Zn(2+) as cofactor.

It is found in the plastid. The protein resides in the chloroplast. It carries out the reaction RNA(n) + a ribonucleoside 5'-triphosphate = RNA(n+1) + diphosphate. Its function is as follows. DNA-dependent RNA polymerase catalyzes the transcription of DNA into RNA using the four ribonucleoside triphosphates as substrates. The chain is DNA-directed RNA polymerase subunit beta'' from Illicium oligandrum (Star anise).